The chain runs to 100 residues: MNLTPREKDKLLIAMAAIVARKRLERGVKLNHPEAIALITDFVVEGARDGRPVAELMEAGAHVVTRAQVMQGIAEMIHDVQVEATFPDGTKLVTVHAPIR.

This sequence belongs to the urease gamma subunit family. As to quaternary structure, heterotrimer of UreA (gamma), UreB (beta) and UreC (alpha) subunits. Three heterotrimers associate to form the active enzyme.

The protein localises to the cytoplasm. It catalyses the reaction urea + 2 H2O + H(+) = hydrogencarbonate + 2 NH4(+). It functions in the pathway nitrogen metabolism; urea degradation; CO(2) and NH(3) from urea (urease route): step 1/1. The polypeptide is Urease subunit gamma (Mesorhizobium japonicum (strain LMG 29417 / CECT 9101 / MAFF 303099) (Mesorhizobium loti (strain MAFF 303099))).